The sequence spans 359 residues: Ribosomal RNA large subunit methyltransferase M (359 aa).

Residues Ser186, 219–222 (CPGG), Asp238, Asp258, and Asp275 contribute to the S-adenosyl-L-methionine site. Catalysis depends on Lys304, which acts as the Proton acceptor.

The protein belongs to the class I-like SAM-binding methyltransferase superfamily. RNA methyltransferase RlmE family. RlmM subfamily. In terms of assembly, monomer.

The protein localises to the cytoplasm. The catalysed reaction is cytidine(2498) in 23S rRNA + S-adenosyl-L-methionine = 2'-O-methylcytidine(2498) in 23S rRNA + S-adenosyl-L-homocysteine + H(+). In terms of biological role, catalyzes the 2'-O-methylation at nucleotide C2498 in 23S rRNA. The polypeptide is Ribosomal RNA large subunit methyltransferase M (Aliivibrio fischeri (strain MJ11) (Vibrio fischeri)).